We begin with the raw amino-acid sequence, 190 residues long: Putative resolvase R771 (190 aa).

The H-T-H motif DNA-binding region spans serine 11–isoleucine 30. Positions leucine 61 to lysine 190 constitute a Resolvase/invertase-type recombinase catalytic domain. A coiled-coil region spans residues valine 66–threonine 92. Serine 69 (O-(5'-phospho-DNA)-serine intermediate) is an active-site residue.

This sequence belongs to the site-specific recombinase resolvase family.

In terms of biological role, resolvase catalyzes the resolution (a site-specific recombination) of the cointegrated replicon to yield the final transposition products. This is Putative resolvase R771 from Acanthamoeba polyphaga (Amoeba).